A 524-amino-acid polypeptide reads, in one-letter code: Probable lipid II flippase MurJ (524 aa).

Transmembrane regions (helical) follow at residues 44–64, 103–123, 146–166, 172–192, 195–215, 250–270, 284–304, 322–342, 367–387, 396–416, 420–440, 456–476, and 494–514; these read IFGA…PNLL, LLTL…PWVI, ITFP…ILNT, IPAF…LFAA, FNPP…LQLV, ILGV…ASFL, LMEF…LPSL, WGLR…GILA, LIAY…APGF, PVKI…AFIG, HAGL…LLYW, WFLM…FGVL, and LMAV…VLGF.

It belongs to the MurJ/MviN family.

It is found in the cell inner membrane. It functions in the pathway cell wall biogenesis; peptidoglycan biosynthesis. Its function is as follows. Involved in peptidoglycan biosynthesis. Transports lipid-linked peptidoglycan precursors from the inner to the outer leaflet of the cytoplasmic membrane. The chain is Probable lipid II flippase MurJ from Salmonella typhimurium (strain LT2 / SGSC1412 / ATCC 700720).